A 121-amino-acid polypeptide reads, in one-letter code: UPF0295 protein BH0952 (121 aa).

2 helical membrane passes run 12 to 32 (IRTFALSLVFLGILVMYIGIF) and 41 to 61 (VLAMILGFLCIIASTAVYFWI).

The protein belongs to the UPF0295 family.

The protein resides in the cell membrane. This chain is UPF0295 protein BH0952, found in Halalkalibacterium halodurans (strain ATCC BAA-125 / DSM 18197 / FERM 7344 / JCM 9153 / C-125) (Bacillus halodurans).